The primary structure comprises 165 residues: Lipoprotein signal peptidase (165 aa).

5 helical membrane-spanning segments follow: residues 10-30 (LKWL…KYWV), 42-62 (VLPG…GLFT), 71-91 (LFVW…YKLI), 105-125 (IGGA…VDFI), and 133-153 (HWPT…IVTI). Catalysis depends on residues aspartate 123 and aspartate 141.

It belongs to the peptidase A8 family.

It is found in the cell inner membrane. It carries out the reaction Release of signal peptides from bacterial membrane prolipoproteins. Hydrolyzes -Xaa-Yaa-Zaa-|-(S,diacylglyceryl)Cys-, in which Xaa is hydrophobic (preferably Leu), and Yaa (Ala or Ser) and Zaa (Gly or Ala) have small, neutral side chains.. Its pathway is protein modification; lipoprotein biosynthesis (signal peptide cleavage). Its function is as follows. This protein specifically catalyzes the removal of signal peptides from prolipoproteins. This is Lipoprotein signal peptidase from Blochmanniella pennsylvanica (strain BPEN).